The primary structure comprises 169 residues: uncharacterized protein (169 aa).

Residues 55–77 form a helical membrane-spanning segment; sequence SLFIFKAVMILHTCLIVKSIRIF.

The protein resides in the membrane. This is an uncharacterized protein from Saccharomyces cerevisiae (strain ATCC 204508 / S288c) (Baker's yeast).